The following is a 371-amino-acid chain: Conglutinin (371 aa).

Residues 1–20 (MLLLPLSVLLLLTQPWRSLG) form the signal peptide. A Collagen-like domain is found at 46-216 (GLPGHDGQDG…TGAKGESGLA (171 aa)). A disordered region spans residues 47–215 (LPGHDGQDGR…ETGAKGESGL (169 aa)). A compositionally biased stretch (basic and acidic residues) spans 51–65 (DGQDGRECPHGEKGD). A 5-hydroxylysine modification is found at K63. Positions 71–83 (PAGRAGRPGWVGP) are enriched in low complexity. Position 78 is a 4-hydroxyproline (P78). K87 carries the post-translational modification 5-hydroxylysine. P96 is modified (4-hydroxyproline). K99 carries the post-translational modification 5-hydroxylysine. 4-hydroxyproline occurs at positions 108, 111, 129, and 132. 5-hydroxylysine is present on residues K135 and K141. The segment covering 139–148 (GPKGGVGAPG) has biased composition (gly residues). A 4-hydroxyproline mark is found at P147 and P153. 5-hydroxylysine occurs at positions 159 and 162. A 4-hydroxyproline mark is found at P171 and P195. The residue at position 198 (K198) is a 5-hydroxylysine. A Cell attachment site motif is present at residues 201–203 (RGD). The C-type lectin domain maps to 273–371 (QLCREAKGQL…SKQLLVICEF (99 aa)). 2 disulfides stabilise this stretch: C275-C369 and C347-C361. N-linked (GlcNAc...) asparagine glycosylation occurs at N337.

Belongs to the SFTPD family. As to quaternary structure, oligomeric complex of 4 set of homotrimers. Post-translationally, the hydroxylysines may be O-glycosylated.

Functionally, calcium-dependent lectin-like protein which binds to a yeast cell wall extract and immune complexes through the complement component (C3bi). It is capable of binding non-reducing terminal N-acetylglucosamine, mannose, and fucose residues. This is Conglutinin (CGN1) from Bos taurus (Bovine).